A 232-amino-acid polypeptide reads, in one-letter code: 5'-methylthioadenosine/S-adenosylhomocysteine nucleosidase (232 aa).

E12 (proton acceptor) is an active-site residue. Substrate-binding positions include G78, I152, and 173–174 (ME). D197 acts as the Proton donor in catalysis.

The protein belongs to the PNP/UDP phosphorylase family. MtnN subfamily. Homodimer.

The enzyme catalyses S-adenosyl-L-homocysteine + H2O = S-(5-deoxy-D-ribos-5-yl)-L-homocysteine + adenine. It catalyses the reaction S-methyl-5'-thioadenosine + H2O = 5-(methylsulfanyl)-D-ribose + adenine. It carries out the reaction 5'-deoxyadenosine + H2O = 5-deoxy-D-ribose + adenine. Its pathway is amino-acid biosynthesis; L-methionine biosynthesis via salvage pathway; S-methyl-5-thio-alpha-D-ribose 1-phosphate from S-methyl-5'-thioadenosine (hydrolase route): step 1/2. Its function is as follows. Catalyzes the irreversible cleavage of the glycosidic bond in both 5'-methylthioadenosine (MTA) and S-adenosylhomocysteine (SAH/AdoHcy) to adenine and the corresponding thioribose, 5'-methylthioribose and S-ribosylhomocysteine, respectively. Also cleaves 5'-deoxyadenosine, a toxic by-product of radical S-adenosylmethionine (SAM) enzymes, into 5-deoxyribose and adenine. Thus, is required for in vivo function of the radical SAM enzymes biotin synthase and lipoic acid synthase, that are inhibited by 5'-deoxyadenosine accumulation. This is 5'-methylthioadenosine/S-adenosylhomocysteine nucleosidase from Escherichia coli O7:K1 (strain IAI39 / ExPEC).